Here is a 661-residue protein sequence, read N- to C-terminus: UvrABC system protein C (661 aa).

The region spanning His52–Val130 is the GIY-YIG domain. Residues Gln240 to Ile275 form the UVR domain.

It belongs to the UvrC family. As to quaternary structure, interacts with UvrB in an incision complex.

It is found in the cytoplasm. In terms of biological role, the UvrABC repair system catalyzes the recognition and processing of DNA lesions. UvrC both incises the 5' and 3' sides of the lesion. The N-terminal half is responsible for the 3' incision and the C-terminal half is responsible for the 5' incision. This Bartonella henselae (strain ATCC 49882 / DSM 28221 / CCUG 30454 / Houston 1) (Rochalimaea henselae) protein is UvrABC system protein C.